The chain runs to 216 residues: Adenylate kinase (216 aa).

Residue 10-15 coordinates ATP; sequence GSGKGT. The NMP stretch occupies residues 30–59; it reads STGDMLRAAVKEGTPMGVKAKAKMDAGALV. Residues Thr-31, Arg-36, 57-59, 85-88, and Gln-92 contribute to the AMP site; these read ALV and GFPR. The LID stretch occupies residues 126–163; that stretch reads GRRTCRDCGKMYHVEFDAPAVADKCDKCGGQLFQRDDD. Arg-127 is an ATP binding site. Cys-130, Cys-133, Cys-150, and Cys-153 together coordinate Zn(2+). Arg-160 and Arg-171 together coordinate AMP. ATP is bound at residue Lys-199.

Belongs to the adenylate kinase family. Monomer.

It is found in the cytoplasm. The catalysed reaction is AMP + ATP = 2 ADP. Its pathway is purine metabolism; AMP biosynthesis via salvage pathway; AMP from ADP: step 1/1. Its function is as follows. Catalyzes the reversible transfer of the terminal phosphate group between ATP and AMP. Plays an important role in cellular energy homeostasis and in adenine nucleotide metabolism. In Syntrophotalea carbinolica (strain DSM 2380 / NBRC 103641 / GraBd1) (Pelobacter carbinolicus), this protein is Adenylate kinase.